Consider the following 160-residue polypeptide: Lipoprotein signal peptidase (160 aa).

4 helical membrane-spanning segments follow: residues 7 to 27 (WFWL…YITV), 39 to 59 (LWPG…FSFF), 62 to 82 (GAVW…FLGW), and 96 to 116 (GFIL…GYVV). Catalysis depends on residues Asp-117 and Asp-133. A helical transmembrane segment spans residues 126 to 146 (FPVFNLADTFINIGIFFLLLA).

It belongs to the peptidase A8 family.

The protein localises to the cell inner membrane. The enzyme catalyses Release of signal peptides from bacterial membrane prolipoproteins. Hydrolyzes -Xaa-Yaa-Zaa-|-(S,diacylglyceryl)Cys-, in which Xaa is hydrophobic (preferably Leu), and Yaa (Ala or Ser) and Zaa (Gly or Ala) have small, neutral side chains.. It participates in protein modification; lipoprotein biosynthesis (signal peptide cleavage). Its function is as follows. This protein specifically catalyzes the removal of signal peptides from prolipoproteins. The sequence is that of Lipoprotein signal peptidase from Gloeothece citriformis (strain PCC 7424) (Cyanothece sp. (strain PCC 7424)).